The sequence spans 546 residues: Putative serine hydroxymethyltransferase, mitochondrial (546 aa).

A mitochondrion-targeting transit peptide spans 1–64 (MSSFQSTAAV…RFSSSSIAND (64 aa)). At K305 the chain carries N6-(pyridoxal phosphate)lysine.

The protein belongs to the SHMT family. As to quaternary structure, homotetramer. The cofactor is pyridoxal 5'-phosphate.

Its subcellular location is the mitochondrion. It carries out the reaction (6R)-5,10-methylene-5,6,7,8-tetrahydrofolate + glycine + H2O = (6S)-5,6,7,8-tetrahydrofolate + L-serine. The protein operates within one-carbon metabolism; tetrahydrofolate interconversion. In terms of biological role, interconversion of serine and glycine. This chain is Putative serine hydroxymethyltransferase, mitochondrial (cbs-2), found in Neurospora crassa (strain ATCC 24698 / 74-OR23-1A / CBS 708.71 / DSM 1257 / FGSC 987).